Consider the following 246-residue polypeptide: MNNNTTAPTYTLRGLQLIGWRDMQHALDYLFADGQLKQGTLVAINAEKMLTIEDNAEVRELINAAEFKYADGISIVRSVRKKYPQAQVSRVAGADLWEELMARAGKEGTPVFLVGGKPEVLAQTEAKLRNQWNVNIVGSQDGYFKPEQRQALFERIHASGAQIVTVAMGSPKQEIFMRDCRLVHPDALYMGVGGTYDVFTGHVKRAPKIWQTLGLEWLYRLLSQPSRIKRQLRLLRYLRWHYTGNL.

It belongs to the glycosyltransferase 26 family.

The enzyme catalyses UDP-N-acetyl-alpha-D-mannosaminouronate + N-acetyl-alpha-D-glucosaminyl-di-trans,octa-cis-undecaprenyl diphosphate = beta-D-ManNAcA-(1-&gt;4)-alpha-D-GlcNAc-di-trans,octa-cis-undecaprenyl diphosphate + UDP + H(+). It functions in the pathway bacterial outer membrane biogenesis; enterobacterial common antigen biosynthesis. In terms of biological role, catalyzes the synthesis of Und-PP-GlcNAc-ManNAcA (Lipid II), the second lipid-linked intermediate involved in enterobacterial common antigen (ECA) synthesis. The chain is UDP-N-acetyl-D-mannosaminuronic acid transferase from Shigella flexneri.